The primary structure comprises 126 residues: MPEPAKSAPAPKKGSKKAVTKTQKKGDKKRRKTRKESYAIYVYKVLKQVHPDTGISSKAMGIMNSFVNDIFERIAGEASRLAHYNKRSTITSREIQTAVRLLLPGELAKHAVSEGTKAVTKYTSSK.

Over residues 1–12 (MPEPAKSAPAPK) the composition is skewed to low complexity. The segment at 1-34 (MPEPAKSAPAPKKGSKKAVTKTQKKGDKKRRKTR) is disordered. An N6-acetyllysine mark is found at Lys-6 and Lys-13. Positions 13–34 (KGSKKAVTKTQKKGDKKRRKTR) are enriched in basic residues. Ser-15 is modified (phosphoserine). Lys-16 and Lys-21 each carry N6-acetyllysine. Ser-113 carries O-linked (GlcNAc) serine glycosylation. A Glycyl lysine isopeptide (Lys-Gly) (interchain with G-Cter in ubiquitin) cross-link involves residue Lys-121.

It belongs to the histone H2B family. The nucleosome is a histone octamer containing two molecules each of H2A, H2B, H3 and H4 assembled in one H3-H4 heterotetramer and two H2A-H2B heterodimers. The octamer wraps approximately 147 bp of DNA. Post-translationally, monoubiquitination of Lys-121 by the BRE1 gives a specific tag for epigenetic transcriptional activation and is also prerequisite for histone H3 'Lys-4' and 'Lys-79' methylation. Phosphorylated on Ser-15 during apoptosis; which facilitates apoptotic chromatin condensation. In terms of processing, glcNAcylation at Ser-113 promotes monoubiquitination of Lys-121. It fluctuates in response to extracellular glucose, and associates with transcribed genes.

Its subcellular location is the nucleus. It is found in the chromosome. Functionally, core component of nucleosome. Nucleosomes wrap and compact DNA into chromatin, limiting DNA accessibility to the cellular machineries which require DNA as a template. Histones thereby play a central role in transcription regulation, DNA repair, DNA replication and chromosomal stability. DNA accessibility is regulated via a complex set of post-translational modifications of histones, also called histone code, and nucleosome remodeling. The chain is Histone H2B 3 (hist2h2l) from Danio rerio (Zebrafish).